A 440-amino-acid chain; its full sequence is Protein CyaD (440 aa).

At 1–55 the chain is on the cytoplasmic side; the sequence is MRRALRELAARHGRVLAASWRQRHRRPAGWFDPVETEFLPSALSLQERPISPTAR. A helical membrane pass occupies residues 56–75; sequence WLARILMALAAGALVWSVVG. At 76-440 the chain is on the periplasmic side; that stretch reads KTEIVVHAAG…RHAGESLGER (365 aa).

This sequence belongs to the membrane fusion protein (MFP) (TC 8.A.1) family.

It localises to the cell inner membrane. In terms of biological role, cyaD is necessary for transport of calmodulin-sensitive adenylate cyclase-hemolysin (cyclolysin). The sequence is that of Protein CyaD (cyaD) from Bordetella pertussis (strain ATCC 9797 / DSM 5571 / CCUG 30873 / LMG 14455 / NCTC 10739 / 18323).